The sequence spans 169 residues: ATP synthase subunit b (169 aa).

A helical membrane pass occupies residues 12-32 (HIYLGNALWYLICFAILLLLI).

Belongs to the ATPase B chain family. As to quaternary structure, F-type ATPases have 2 components, F(1) - the catalytic core - and F(0) - the membrane proton channel. F(1) has five subunits: alpha(3), beta(3), gamma(1), delta(1), epsilon(1). F(0) has three main subunits: a(1), b(2) and c(10-14). The alpha and beta chains form an alternating ring which encloses part of the gamma chain. F(1) is attached to F(0) by a central stalk formed by the gamma and epsilon chains, while a peripheral stalk is formed by the delta and b chains.

Its subcellular location is the cell membrane. Functionally, f(1)F(0) ATP synthase produces ATP from ADP in the presence of a proton or sodium gradient. F-type ATPases consist of two structural domains, F(1) containing the extramembraneous catalytic core and F(0) containing the membrane proton channel, linked together by a central stalk and a peripheral stalk. During catalysis, ATP synthesis in the catalytic domain of F(1) is coupled via a rotary mechanism of the central stalk subunits to proton translocation. Its function is as follows. Component of the F(0) channel, it forms part of the peripheral stalk, linking F(1) to F(0). The polypeptide is ATP synthase subunit b (Lactobacillus helveticus (strain DPC 4571)).